A 768-amino-acid chain; its full sequence is WD repeat-containing protein 20 homolog (768 aa).

Residues glutamate 103 to proline 122 are disordered. 4 WD repeats span residues isoleucine 224 to asparagine 264, isoleucine 302 to valine 342, serine 345 to arginine 384, and cysteine 454 to glycine 497. Positions valine 531–asparagine 608 are disordered. Residues asparagine 539–threonine 553 are compositionally biased toward polar residues. The segment covering phenylalanine 570 to serine 582 has biased composition (low complexity). Polar residues predominate over residues asparagine 595–asparagine 608. Residues valine 646–arginine 683 form a WD 5 repeat. A disordered region spans residues aspartate 684–valine 749. The segment covering serine 688–glycine 712 has biased composition (polar residues). Positions serine 724–serine 733 are enriched in low complexity. Positions glutamate 734–valine 749 are enriched in polar residues.

As to quaternary structure, interacts with usp-46; the interaction increases the catalytic activity of usp-46 in the presence of wdr-48. In terms of tissue distribution, expressed in several neurons in the head and tail.

Its function is as follows. Together with wdr-48, binds to and stimulates the activity of the deubiquitinating enzyme usp-46, leading to deubiquitination and stabilization of the glr-1 glutamate receptor. The chain is WD repeat-containing protein 20 homolog from Caenorhabditis elegans.